A 482-amino-acid chain; its full sequence is MKFIIKLFPEITIKSQSVRLRFIKILTGNIRNVLKNYDETLAVVRHWDHIEVRAKDENQRPAIRDALTRIPGIHHILEVEDVPFTSLHDIFEKTLPLWREALEGKTFCVRVKRRGKHEFTSIEVERYVGGGLNQHIETARVKLTDPDVTVNLEIENDRLLLVKGRYEGIGGFPIGTQEDVLSLISGGFDSGVSSYMLMRRGCRVHYCFFNLGGAAHEIGVRQVAHYLWNRFGSSHRVRFVAINFEPVVGEILEKVDDGQMGVVLKRMMVRAASKVAERYGVQALVTGEALGQVSSQTLTNLRLIDNVSDTLILRPLISHDKEHIIDLAREIGTEDFARTMPEYCGVISKSPTVKAVKAKIEAEEEHFDFSILDKVVEEASNIDIRDIAQQTEAAVVEVETVTGFGANDAILDIRSIDEQEDKPLKVEGVEVVSLPFYKLSTKFGDLDQSKTWLLWCERGVMSRLQALYLREQGFSNVKVYRP.

In terms of domain architecture, THUMP spans 61–165 (PAIRDALTRI…NDRLLLVKGR (105 aa)). Residues 183–184 (LI), K265, G287, and Q296 contribute to the ATP site. A disulfide bridge links C344 with C456. Residues 404–482 (FGANDAILDI…GFSNVKVYRP (79 aa)) form the Rhodanese domain. C456 serves as the catalytic Cysteine persulfide intermediate.

It belongs to the ThiI family.

The protein localises to the cytoplasm. The enzyme catalyses [ThiI sulfur-carrier protein]-S-sulfanyl-L-cysteine + a uridine in tRNA + 2 reduced [2Fe-2S]-[ferredoxin] + ATP + H(+) = [ThiI sulfur-carrier protein]-L-cysteine + a 4-thiouridine in tRNA + 2 oxidized [2Fe-2S]-[ferredoxin] + AMP + diphosphate. It carries out the reaction [ThiS sulfur-carrier protein]-C-terminal Gly-Gly-AMP + S-sulfanyl-L-cysteinyl-[cysteine desulfurase] + AH2 = [ThiS sulfur-carrier protein]-C-terminal-Gly-aminoethanethioate + L-cysteinyl-[cysteine desulfurase] + A + AMP + 2 H(+). It functions in the pathway cofactor biosynthesis; thiamine diphosphate biosynthesis. Catalyzes the ATP-dependent transfer of a sulfur to tRNA to produce 4-thiouridine in position 8 of tRNAs, which functions as a near-UV photosensor. Also catalyzes the transfer of sulfur to the sulfur carrier protein ThiS, forming ThiS-thiocarboxylate. This is a step in the synthesis of thiazole, in the thiamine biosynthesis pathway. The sulfur is donated as persulfide by IscS. This chain is tRNA sulfurtransferase, found in Klebsiella pneumoniae (strain 342).